A 277-amino-acid chain; its full sequence is Ribosomal RNA small subunit methyltransferase A (277 aa).

S-adenosyl-L-methionine is bound by residues N26, L28, G53, E74, D101, and N123.

This sequence belongs to the class I-like SAM-binding methyltransferase superfamily. rRNA adenine N(6)-methyltransferase family. RsmA subfamily.

It is found in the cytoplasm. The enzyme catalyses adenosine(1518)/adenosine(1519) in 16S rRNA + 4 S-adenosyl-L-methionine = N(6)-dimethyladenosine(1518)/N(6)-dimethyladenosine(1519) in 16S rRNA + 4 S-adenosyl-L-homocysteine + 4 H(+). Functionally, specifically dimethylates two adjacent adenosines (A1518 and A1519) in the loop of a conserved hairpin near the 3'-end of 16S rRNA in the 30S particle. May play a critical role in biogenesis of 30S subunits. In Opitutus terrae (strain DSM 11246 / JCM 15787 / PB90-1), this protein is Ribosomal RNA small subunit methyltransferase A.